The sequence spans 669 residues: UvrABC system protein C (669 aa).

The 80-residue stretch at 16–95 folds into the GIY-YIG domain; it reads TNPGVYRFRD…IKEFKPRFNV (80 aa). Positions 207–242 constitute a UVR domain; the sequence is KRFIGRLEKDMAAAVAELDYERAARVRDDIIALRKV.

The protein belongs to the UvrC family. As to quaternary structure, interacts with UvrB in an incision complex.

The protein localises to the cytoplasm. Its function is as follows. The UvrABC repair system catalyzes the recognition and processing of DNA lesions. UvrC both incises the 5' and 3' sides of the lesion. The N-terminal half is responsible for the 3' incision and the C-terminal half is responsible for the 5' incision. In Arthrobacter sp. (strain FB24), this protein is UvrABC system protein C.